Consider the following 202-residue polypeptide: 3-isopropylmalate dehydratase small subunit (202 aa).

Belongs to the LeuD family. LeuD type 1 subfamily. As to quaternary structure, heterodimer of LeuC and LeuD.

It carries out the reaction (2R,3S)-3-isopropylmalate = (2S)-2-isopropylmalate. The protein operates within amino-acid biosynthesis; L-leucine biosynthesis; L-leucine from 3-methyl-2-oxobutanoate: step 2/4. Functionally, catalyzes the isomerization between 2-isopropylmalate and 3-isopropylmalate, via the formation of 2-isopropylmaleate. The sequence is that of 3-isopropylmalate dehydratase small subunit from Rhizobium johnstonii (strain DSM 114642 / LMG 32736 / 3841) (Rhizobium leguminosarum bv. viciae).